The following is a 274-amino-acid chain: UPF0173 metal-dependent hydrolase A2cp1_1196 (274 aa).

Belongs to the UPF0173 family.

In Anaeromyxobacter dehalogenans (strain 2CP-1 / ATCC BAA-258), this protein is UPF0173 metal-dependent hydrolase A2cp1_1196.